Reading from the N-terminus, the 64-residue chain is Alpha-like toxin BmK M2 (64 aa).

Positions 2 to 64 (RDAYIAKPHN…VPIRVPGKCH (63 aa)) constitute an LCN-type CS-alpha/beta domain. Cystine bridges form between C12-C63, C16-C36, C22-C46, and C26-C48.

Belongs to the long (4 C-C) scorpion toxin superfamily. Sodium channel inhibitor family. Alpha subfamily. As to expression, expressed by the venom gland.

The protein localises to the secreted. Functionally, alpha toxins bind voltage-independently at site-3 of sodium channels (Nav) and inhibit the inactivation of the activated channels, thereby blocking neuronal transmission. This toxin is active against both mammals and insects, and is classified as an alpha-like toxin. The chain is Alpha-like toxin BmK M2 from Olivierus martensii (Manchurian scorpion).